A 946-amino-acid polypeptide reads, in one-letter code: Increased sodium tolerance protein 2 (946 aa).

Residues 1–121 (MSQTITSLDP…SNLTNNPKQS (121 aa)) are Cytoplasmic-facing. The chain crosses the membrane as a helical span at residues 122–142 (LYFAFLQNYIKWLIPFSFFGL). Over 143–153 (SIRFLSNFTYE) the chain is Extracellular. A helical transmembrane segment spans residues 154-174 (FNSTYSLFAILWTLSFTAFWL). Over 175-217 (YKYEPFWSDRLSKYSSFSTIEFLQDKQKAQKKASSVIMLKKCC) the chain is Cytoplasmic. The chain crosses the membrane as a helical span at residues 218–238 (FIPVALLFGAILLSFQLYCFA). Over 239 to 253 (LEIFIKQIYNGPMIS) the chain is Extracellular. A helical transmembrane segment spans residues 254–274 (ILSFLPTILICTFTPVLTVIY). The Cytoplasmic portion of the chain corresponds to 275 to 302 (NKYFVEPMTKWENHSSVVNAKKSKEAKN). Residues 303–323 (FVIIFLSSYVPLLITLFLYLP) traverse the membrane as a helical segment. The Extracellular segment spans residues 324–447 (MGHLLTAEIR…DANFKKLLLQ (124 aa)). A helical transmembrane segment spans residues 448-468 (FGYLVMFSTIWPLAPFICLIV). Over 469 to 505 (NLIVYQVDLRKAVLYSKPEYFPFPIYDKPSSVSNTQK) the chain is Cytoplasmic. The chain crosses the membrane as a helical span at residues 506–526 (LTVGLWNSVLVMFSILGCVIT). At 527-563 (ATLTYMYQSCNIPGVGAHTSIHTNKAWYLANPINHSW) the chain is on the extracellular side. A helical transmembrane segment spans residues 564–584 (INIVLYAVFIEHVSVAIFFLF). Over 585–946 (SSILKSSHDD…GLLHKLKKKL (362 aa)) the chain is Cytoplasmic. Disordered stretches follow at residues 617 to 638 (EKIPSPEFNSNNEKELVQRKGS) and 665 to 718 (THAN…TEKR). The span at 628–638 (NEKELVQRKGS) shows a compositional bias: basic and acidic residues. Phosphoserine is present on serine 638. Residues 671–689 (PSSLSSASSPSLSSSSSSS) show a composition bias toward low complexity. Threonine 701 is modified (phosphothreonine). A phosphoserine mark is found at serine 704 and serine 720. Phosphothreonine is present on threonine 726. The residue at position 729 (serine 729) is a Phosphoserine. Tyrosine 730 bears the Phosphotyrosine mark. Position 757 is a phosphoserine (serine 757). Residues 759–784 (RDAKSSAESSNATNNNTLGTESKLLP) form a disordered region. A compositionally biased stretch (low complexity) spans 764 to 775 (SAESSNATNNNT). Phosphoserine is present on residues serine 793, serine 844, and serine 847. Positions 846–946 (VSVATEQTKK…GLLHKLKKKL (101 aa)) are disordered. A Phosphothreonine modification is found at threonine 850. A compositionally biased stretch (polar residues) spans 859 to 868 (STKNGPSRSI). Positions 884-893 (TTTTTTTDAT) are enriched in low complexity. The segment covering 895-905 (PHHHHHHHRHR) has biased composition (basic residues). A compositionally biased stretch (low complexity) spans 916–927 (SKTTESSSSSSA). The span at 931–946 (KPKHKKGLLHKLKKKL) shows a compositional bias: basic residues.

As to quaternary structure, interacts with BTN2.

The protein resides in the cell membrane. Functionally, may be involved in ion homeostasis together with BTN1 or BTN2. In Saccharomyces cerevisiae (strain ATCC 204508 / S288c) (Baker's yeast), this protein is Increased sodium tolerance protein 2 (IST2).